The sequence spans 337 residues: Fructose-1,6-bisphosphatase class 1 (337 aa).

Glutamate 92, aspartate 114, leucine 116, and aspartate 117 together coordinate Mg(2+). Substrate-binding positions include 117–120 (DGSS), asparagine 209, and lysine 275. Residue glutamate 281 participates in Mg(2+) binding.

It belongs to the FBPase class 1 family. In terms of assembly, homotetramer. The cofactor is Mg(2+).

Its subcellular location is the cytoplasm. It catalyses the reaction beta-D-fructose 1,6-bisphosphate + H2O = beta-D-fructose 6-phosphate + phosphate. The protein operates within carbohydrate biosynthesis; gluconeogenesis. The chain is Fructose-1,6-bisphosphatase class 1 from Thiobacillus denitrificans (strain ATCC 25259 / T1).